Consider the following 502-residue polypeptide: Type II methyltransferase M.HincII (502 aa).

The protein belongs to the N(4)/N(6)-methyltransferase family.

It catalyses the reaction a 2'-deoxyadenosine in DNA + S-adenosyl-L-methionine = an N(6)-methyl-2'-deoxyadenosine in DNA + S-adenosyl-L-homocysteine + H(+). In terms of biological role, a gamma subtype methylase that recognizes the double-stranded sequence 5'-GTYRAC-3', methylates A-5 on both strands, and protects the DNA from cleavage by the HincII endonuclease. This is Type II methyltransferase M.HincII from Haemophilus influenzae.